Here is a 173-residue protein sequence, read N- to C-terminus: Siroheme decarboxylase alpha subunit (173 aa).

Residues H115 and R119 each contribute to the substrate site.

This sequence belongs to the Ahb/Nir family. In terms of assembly, forms a heterodimer composed of AhbA and AhbB.

It carries out the reaction siroheme + 2 H(+) = 12,18-didecarboxysiroheme + 2 CO2. It functions in the pathway porphyrin-containing compound metabolism; protoheme biosynthesis. In terms of biological role, involved in siroheme-dependent heme b biosynthesis. Catalyzes the decarboxylation of siroheme into didecarboxysiroheme. Siroheme is decarboxylated to monodecarboxysiroheme, which is in turn decarboxylated to didecarboxysiroheme. This Desulfovibrio desulfuricans (strain ATCC 27774 / DSM 6949 / MB) protein is Siroheme decarboxylase alpha subunit.